Here is a 367-residue protein sequence, read N- to C-terminus: Cystinosin (367 aa).

Positions 1-22 are cleaved as a signal peptide; that stretch reads MRRNWLLILTLFLLMFIEKYES. Topologically, residues 23–125 are lumenal; that stretch reads TVSLTAPPTV…LVIHSRIVSI (103 aa). N-linked (GlcNAc...) asparagine glycans are attached at residues asparagine 36, asparagine 51, asparagine 66, asparagine 84, asparagine 104, and asparagine 107. The region spanning 123–189 is the PQ-loop 1 domain; that stretch reads VSIINQVIGW…LLWVPYIQEE (67 aa). Residues 126–150 traverse the membrane as a helical segment; the sequence is INQVIGWIYFMAWSVSFYPQVIQNW. Over 151–159 the chain is Cytoplasmic; it reads RRKSVIGLS. Residues 160-179 form a helical membrane-spanning segment; the sequence is FDFLALNLTGFVAYSVFNIG. Asparagine 166 is a binding site for L-cystine. Residues 180-202 are Lumenal-facing; sequence LLWVPYIQEEFLLKYPNGVNPVD. Residues 203-225 form a helical membrane-spanning segment; it reads SNDAFFSLHAVALTLIVILQCCL. Aspartate 205 is a H(+) binding site. Residues 226–234 are Cytoplasmic-facing; that stretch reads YERGNQRVS. A helical membrane pass occupies residues 235-257; the sequence is WPSIGFLVLAWLFVLVTMIVAAV. Topologically, residues 258-263 are lumenal; the sequence is GITTWL. The PQ-loop 2 domain occupies 263 to 328; the sequence is LQFLFCFSYI…QSYNNDQWTL (66 aa). A helical membrane pass occupies residues 264-289; it reads QFLFCFSYIKLIITLIKYFPQAYMNF. Residues lysine 273, lysine 280, and tyrosine 281 each coordinate L-cystine. Residues 290 to 298 lie on the Cytoplasmic side of the membrane; that stretch reads YYKSTKGWS. The helical transmembrane segment at 299 to 308 threads the bilayer; sequence IGGVLLDFTG. Aspartate 305 provides a ligand contact to L-cystine. Position 305 (aspartate 305) interacts with H(+). The Lumenal segment spans residues 309–331; that stretch reads GSFSLLQMFLQSYNNDQWTLIFG. The chain crosses the membrane as a helical span at residues 332 to 354; it reads DPTKFGLGVFTIFFDVVFFIQHF. Aspartate 346 lines the H(+) pocket. The Cytoplasmic portion of the chain corresponds to 355–367; it reads YLYRKKPGYDQLN. The Lysosomal targeting motif motif lies at 362–366; sequence GYDQL.

The protein belongs to the cystinosin family. Interacts with components of the V-ATPase complex. Interacts with components of the Ragulator complex. Interacts with RRAGA/RagA and RRAGC/RagC. Interacts with AP-3 complex subunit mu (AP3M1 or AP3M2).

It localises to the lysosome membrane. The protein resides in the melanosome membrane. It carries out the reaction L-cystine(out) + H(+)(out) = L-cystine(in) + H(+)(in). Its activity is regulated as follows. Switches between a lumen- and a cytosol-open conformation: pH induces conformational changes and shifts the equilibrium to facilitate the transition between the lumen- and cytosol-open conformation, thereby promoting cystine transport. Protonation of specific aspartate residues (Asp-205, Asp-305 and Asp-346) favors the cytosol-open conformation. Cystine/H(+) symporter that mediates export of cystine, the oxidized dimer of cysteine, from lysosomes. Plays an important role in melanin synthesis by catalyzing cystine export from melanosomes, possibly by inhibiting pheomelanin synthesis. In addition to cystine export, also acts as a positive regulator of mTORC1 signaling in kidney proximal tubular cells, via interactions with components of the v-ATPase and Ragulator complexes. Also involved in small GTPase-regulated vesicle trafficking and lysosomal localization of LAMP2A, independently of cystine transporter activity. The sequence is that of Cystinosin from Mus musculus (Mouse).